The chain runs to 463 residues: L-seryl-tRNA(Sec) selenium transferase (463 aa).

At Lys-295 the chain carries N6-(pyridoxal phosphate)lysine.

This sequence belongs to the SelA family. As to quaternary structure, homodecamer; pentamer of dimers. Binds only one seryl-tRNA(Sec) per dimer. It depends on pyridoxal 5'-phosphate as a cofactor.

The protein localises to the cytoplasm. It catalyses the reaction L-seryl-tRNA(Sec) + selenophosphate + H(+) = L-selenocysteinyl-tRNA(Sec) + phosphate. It functions in the pathway aminoacyl-tRNA biosynthesis; selenocysteinyl-tRNA(Sec) biosynthesis; selenocysteinyl-tRNA(Sec) from L-seryl-tRNA(Sec) (bacterial route): step 1/1. Functionally, converts seryl-tRNA(Sec) to selenocysteinyl-tRNA(Sec) required for selenoprotein biosynthesis. The sequence is that of L-seryl-tRNA(Sec) selenium transferase from Proteus mirabilis (strain HI4320).